The primary structure comprises 132 residues: Cell division protein FtsL (132 aa).

At 1–50 the chain is on the cytoplasmic side; that stretch reads MAELKKMRHNHYDVPVMDEPVIASQIKKTNQKKESFQLPQKKLNKISVFE. The helical transmembrane segment at 51 to 71 threads the bilayer; sequence KILCILLLCSIVGIVVITIQI. Topologically, residues 72-132 are extracellular; the sequence is RTTISETMNN…EIDGNLRKVK (61 aa).

It belongs to the FtsL family.

The protein localises to the cell membrane. In terms of biological role, essential cell division protein. This Melissococcus plutonius (strain ATCC 35311 / DSM 29964 / CIP 104052 / LMG 20360 / NCIMB 702443) protein is Cell division protein FtsL.